A 403-amino-acid polypeptide reads, in one-letter code: Argininosuccinate synthase (403 aa).

Residues 12–20 (AYSGGLDTS) and Ala39 contribute to the ATP site. The L-citrulline site is built by Tyr90 and Ser95. Gly120 provides a ligand contact to ATP. The L-aspartate site is built by Thr122, Asn126, and Asp127. Asn126 contacts L-citrulline. Residues Arg130, Ser182, Ser191, Glu267, and Tyr279 each coordinate L-citrulline.

The protein belongs to the argininosuccinate synthase family. Type 1 subfamily. In terms of assembly, homotetramer.

Its subcellular location is the cytoplasm. It catalyses the reaction L-citrulline + L-aspartate + ATP = 2-(N(omega)-L-arginino)succinate + AMP + diphosphate + H(+). It participates in amino-acid biosynthesis; L-arginine biosynthesis; L-arginine from L-ornithine and carbamoyl phosphate: step 2/3. The chain is Argininosuccinate synthase from Vesicomyosocius okutanii subsp. Calyptogena okutanii (strain HA).